The following is a 375-amino-acid chain: Monocyte differentiation antigen CD14 (375 aa).

A signal peptide spans 1–19 (MERASCLLLLLLPLVHVSA). Intrachain disulfides connect cysteine 25/cysteine 36 and cysteine 34/cysteine 51. Asparagine 37 carries an N-linked (GlcNAc...) asparagine glycan. 11 LRR repeats span residues 54–82 (AVEVEIHAGGLNLEPFLKRVDADADPRQY), 83–118 (ADTVKALRVRRLTVGAAQVPAQLLVGALRVLAYSRL), 119–144 (KELTLEDLKITGTMPPLPLEATGLAL), 145–172 (SSLRLRNVSWATGRSWLAELQQWLKPGL), 173–196 (KVLSIAQAHSPAFSCEQVRAFPAL), 197–224 (TSLDLSDNPGLGERGLMAALCPHKFPAI), 225–251 (QNLALRNTGMETPTGVCAALAAAGVQP), 252–278 (HSLDLSHNSLRATVNPSAPRCMWSSAL), 279–299 (NSLNLSFAGLEQVPKGLPAKL), 300–321 (RVLDLSCNRLNRAPQPDELPEV), and 322–349 (DNLTLDGNPFLVPGTALPHEGSMNSGVV). Asparagine 151 carries N-linked (GlcNAc...) asparagine glycosylation. 2 disulfide bridges follow: cysteine 187-cysteine 217 and cysteine 241-cysteine 272. An N-linked (GlcNAc...) asparagine glycan is attached at asparagine 282. Residues 290-375 (QVPKGLPAKL…VLLQGARGFA (86 aa)) are required for response to bacterial lipopolysaccharide (LPS). N-linked (GlcNAc...) asparagine glycosylation occurs at asparagine 323. Threonine 336 carries an O-linked (GalNAc...) threonine glycan. The GPI-anchor amidated asparagine moiety is linked to residue asparagine 345. Positions 346–375 (SGVVPACARSTLSVGVSGTLVLLQGARGFA) are cleaved as a propeptide — removed in mature form.

As to quaternary structure, interacts with LPS-bound LPB. Belongs to the lipopolysaccharide (LPS) receptor, a multi-protein complex containing at least CD14, LY96 and TLR4. Interacts with LPAR1. Interacts with the TLR2:TLR6 or TLR2:TLR1 heterodimers; upon interaction with ligands such as diacylated lipopeptides and triacylated lipopeptides, respectively. Interacts with MYO18A. Interacts with FSTL1. N- and O- glycosylated. O-glycosylated with a core 1 or possibly core 8 glycan. Detected on macrophages (at protein level). Expressed strongly on the surface of monocytes and weakly on the surface of granulocytes; also expressed by most tissue macrophages.

The protein localises to the cell membrane. Its subcellular location is the secreted. It localises to the membrane raft. It is found in the golgi apparatus. Functionally, coreceptor for bacterial lipopolysaccharide. In concert with LBP, binds to monomeric lipopolysaccharide and delivers it to the LY96/TLR4 complex, thereby mediating the innate immune response to bacterial lipopolysaccharide (LPS). Acts via MyD88, TIRAP and TRAF6, leading to NF-kappa-B activation, cytokine secretion and the inflammatory response. Acts as a coreceptor for TLR2:TLR6 heterodimer in response to diacylated lipopeptides and for TLR2:TLR1 heterodimer in response to triacylated lipopeptides, these clusters trigger signaling from the cell surface and subsequently are targeted to the Golgi in a lipid-raft dependent pathway. Binds electronegative LDL (LDL(-)) and mediates the cytokine release induced by LDL(-). The sequence is that of Monocyte differentiation antigen CD14 (CD14) from Homo sapiens (Human).